The primary structure comprises 4753 residues: Dynein heavy chain domain-containing protein 1 (4753 aa).

Coiled-coil stretches lie at residues I826–E858 and K936–L991. Residues H2688–H2766 form a disordered region. Acidic residues predominate over residues E2695–G2712. Positions R2740 to P2751 are enriched in polar residues. 3 coiled-coil regions span residues L3125–A3227, M3590–K3651, and G4431–V4460. A disordered region spans residues A3580 to Q3657. Residues K3602–E3615 show a composition bias toward acidic residues. Over residues D3616–E3631 the composition is skewed to basic and acidic residues. Positions K3632–E3641 are enriched in acidic residues. The interval A4669–P4697 is disordered.

The protein belongs to the dynein heavy chain family. Expressed in spermatozoa (at protein level).

It is found in the cell projection. It localises to the cilium. The protein resides in the flagellum. Its function is as follows. Essential for the normal assembly and function of sperm flagella axonemes. The sequence is that of Dynein heavy chain domain-containing protein 1 (DNHD1) from Homo sapiens (Human).